The sequence spans 469 residues: Alpha,alpha-trehalose-phosphate synthase [UDP-forming] (469 aa).

Residues Tyr87 and Asp141 each coordinate D-glucose 6-phosphate. Positions 279 and 284 each coordinate UDP. UDP-alpha-D-glucose is bound by residues Arg279 and Lys284. D-glucose 6-phosphate is bound at residue Arg317. Residue 378 to 386 coordinates UDP-alpha-D-glucose; that stretch reads DGMNLVSYE. 382–386 contacts UDP; the sequence is LVSYE.

It belongs to the glycosyltransferase 20 family.

It catalyses the reaction D-glucose 6-phosphate + UDP-alpha-D-glucose = alpha,alpha-trehalose 6-phosphate + UDP + H(+). It functions in the pathway carbohydrate biosynthesis. Functionally, synthase catalytic subunit of the trehalose synthase complex that catalyzes the production of trehalose from glucose-6-phosphate and UDP-alpha-D-glucose in a two step process. The disaccharide trehalose serves as a storage carbohydrate that is mobilized during spore germination. In Yarrowia lipolytica (strain CLIB 122 / E 150) (Yeast), this protein is Alpha,alpha-trehalose-phosphate synthase [UDP-forming].